A 658-amino-acid polypeptide reads, in one-letter code: Threonine--tRNA ligase (658 aa).

The region spanning 1 to 64 (MSNTVSLQFP…GASGKLEIIT (64 aa)) is the TGS domain. Residues 246–548 (DHRRLGREMD…LIENFAGHMP (303 aa)) are catalytic. C343, H394, and H525 together coordinate Zn(2+).

Belongs to the class-II aminoacyl-tRNA synthetase family. Homodimer. The cofactor is Zn(2+).

The protein localises to the cytoplasm. The catalysed reaction is tRNA(Thr) + L-threonine + ATP = L-threonyl-tRNA(Thr) + AMP + diphosphate + H(+). Catalyzes the attachment of threonine to tRNA(Thr) in a two-step reaction: L-threonine is first activated by ATP to form Thr-AMP and then transferred to the acceptor end of tRNA(Thr). Also edits incorrectly charged L-seryl-tRNA(Thr). The chain is Threonine--tRNA ligase from Brucella abortus (strain S19).